The sequence spans 2057 residues: Protein TIC 214 (2057 aa).

4 helical membrane-spanning segments follow: residues 13–33, 62–82, 158–178, and 206–226; these read KIIN…AFSI, LIMG…HIAL, LFVT…CEFF, and SDYF…HSFG. The stretch at 248 to 340 forms a coiled coil; the sequence is LILKGTDEEE…RVIQEKERKS (93 aa). Over residues 288 to 302 the composition is skewed to basic residues; sequence NHLKKKKDRQKKQGT. Disordered stretches follow at residues 288–316, 614–807, 890–910, 1597–1634, and 1724–1817; these read NHLK…NSNT, ETHT…EEKG, DEQT…NDRV, EEEE…TNND, and KKKN…KSLS. Basic and acidic residues-rich tracts occupy residues 621-657 and 665-702; these read ATDK…KETK and NTVD…KETK. Positions 704-713 are enriched in polar residues; it reads NASKETNTVN. 2 stretches are compositionally biased toward basic and acidic residues: residues 714–807 and 891–900; these read KETK…EEKG and EQTKREEKPK. Acidic residues predominate over residues 1597–1619; sequence EEEEINPEEEINPEEEINPEEEI. Residues 1622–1634 are compositionally biased toward polar residues; it reads SSNQKTPIGTNND. Residues 1753 to 1817 show a composition bias toward basic and acidic residues; sequence TNSEKKSKTN…ETDSEKKSLS (65 aa).

This sequence belongs to the TIC214 family. Part of the Tic complex.

It localises to the plastid. Its subcellular location is the chloroplast inner membrane. Involved in protein precursor import into chloroplasts. May be part of an intermediate translocation complex acting as a protein-conducting channel at the inner envelope. The chain is Protein TIC 214 from Ipomoea purpurea (Common morning glory).